A 123-amino-acid chain; its full sequence is Large ribosomal subunit protein bL12 (123 aa).

It belongs to the bacterial ribosomal protein bL12 family. Homodimer. Part of the ribosomal stalk of the 50S ribosomal subunit. Forms a multimeric L10(L12)X complex, where L10 forms an elongated spine to which 2 to 4 L12 dimers bind in a sequential fashion. Binds GTP-bound translation factors.

In terms of biological role, forms part of the ribosomal stalk which helps the ribosome interact with GTP-bound translation factors. Is thus essential for accurate translation. The sequence is that of Large ribosomal subunit protein bL12 from Mycoplasmopsis agalactiae (strain NCTC 10123 / CIP 59.7 / PG2) (Mycoplasma agalactiae).